The primary structure comprises 605 residues: DNA mismatch repair protein MutL (605 aa).

It belongs to the DNA mismatch repair MutL/HexB family.

In terms of biological role, this protein is involved in the repair of mismatches in DNA. It is required for dam-dependent methyl-directed DNA mismatch repair. May act as a 'molecular matchmaker', a protein that promotes the formation of a stable complex between two or more DNA-binding proteins in an ATP-dependent manner without itself being part of a final effector complex. The chain is DNA mismatch repair protein MutL from Pelotomaculum thermopropionicum (strain DSM 13744 / JCM 10971 / SI).